A 671-amino-acid chain; its full sequence is Probable potassium transport system protein Kup 2 (671 aa).

12 helical membrane-spanning segments follow: residues 12–32 (FAGL…SPLY), 56–76 (ISLI…MIAL), 99–119 (WLVI…TLTP), 139–159 (IPVP…VILF), 172–192 (AFGP…IANL), 218–238 (VGIL…ALYS), 251–271 (SWPY…AWIL), 296–316 (LFAI…LITG), 345–365 (IYIP…VFLF), 374–394 (AYGL…FEYL), 400–420 (PLYL…MFLI), and 429–449 (GGYV…VWFY).

This sequence belongs to the HAK/KUP transporter (TC 2.A.72) family.

The protein localises to the cell membrane. The catalysed reaction is K(+)(in) + H(+)(in) = K(+)(out) + H(+)(out). Transport of potassium into the cell. Likely operates as a K(+):H(+) symporter. The sequence is that of Probable potassium transport system protein Kup 2 from Lactobacillus acidophilus (strain ATCC 700396 / NCK56 / N2 / NCFM).